We begin with the raw amino-acid sequence, 289 residues long: Phospholipase A1 (289 aa).

Residues 1–20 form the signal peptide; that stretch reads MRTLQGWLLPVFMLPMAVYA. The Periplasmic portion of the chain corresponds to 21 to 52; the sequence is QEATVKEVHDAPAVRGSIIANMLQEHDNPFTL. A beta stranded membrane pass occupies residues 53–65; it reads YPYDTNYLIYTQT. At 66–84 the chain is on the extracellular side; sequence SDLNKEAIASYDWAENARK. A beta stranded transmembrane segment spans residues 85-99; sequence DEVKFQLSLAFPLWR. Residues 100–105 lie on the Periplasmic side of the membrane; sequence GILGPN. Residues 106–118 form a beta stranded membrane-spanning segment; sequence SVLGASYTQKSWW. The Extracellular segment spans residues 119-128; that stretch reads QLSNSEESSP. Ser126 is a binding site for Ca(2+). Residues 129–148 traverse the membrane as a beta stranded segment; that stretch reads FRETNYEPQLFLGFATDYRF. Residues 149 to 150 are Periplasmic-facing; the sequence is AG. Residues 151–164 traverse the membrane as a beta stranded segment; that stretch reads WTLRDVEMGYNHDS. His162 acts as the Proton acceptor in catalysis. The Nucleophile role is filled by Ser164. Residues 165 to 173 are Extracellular-facing; that stretch reads NGRSDPTSR. Positions 167 and 172 each coordinate Ca(2+). A beta stranded membrane pass occupies residues 174-186; the sequence is SWNRLYTRLMAEN. Over 187 to 188 the chain is Periplasmic; that stretch reads GN. Residues 189 to 198 traverse the membrane as a beta stranded segment; the sequence is WLVEVKPWYV. Residues 199–216 lie on the Extracellular side of the membrane; sequence VGNTDDNPDITKYMGYYQ. A Ca(2+)-binding site is contributed by Asp204. The chain crosses the membrane as a beta stranded span at residues 217–223; the sequence is LKIGYHL. Topologically, residues 224 to 225 are periplasmic; sequence GD. Residues 226-234 traverse the membrane as a beta stranded segment; that stretch reads AVLSAKGQY. Residues 235–241 are Extracellular-facing; that stretch reads NWNTGYG. The beta stranded transmembrane segment at 242–250 threads the bilayer; the sequence is GAELGLSYP. Residues 251–255 are Periplasmic-facing; that stretch reads ITKHV. The chain crosses the membrane as a beta stranded span at residues 256–265; the sequence is RLYTQVYSGY. Topologically, residues 266–274 are extracellular; that stretch reads GESLIDYNF. A beta stranded transmembrane segment spans residues 275–286; that stretch reads NQTRVGVGVMLN. At 287 to 289 the chain is on the periplasmic side; that stretch reads DLF.

This sequence belongs to the phospholipase A1 family. Homodimer; dimerization is reversible, and the dimeric form is the active one. Ca(2+) serves as cofactor.

The protein resides in the cell outer membrane. The catalysed reaction is a 1,2-diacyl-sn-glycero-3-phosphocholine + H2O = a 2-acyl-sn-glycero-3-phosphocholine + a fatty acid + H(+). The enzyme catalyses a 1,2-diacyl-sn-glycero-3-phosphocholine + H2O = a 1-acyl-sn-glycero-3-phosphocholine + a fatty acid + H(+). Its function is as follows. Hydrolysis of phosphatidylcholine with phospholipase A2 (EC 3.1.1.4) and phospholipase A1 (EC 3.1.1.32) activities. In Escherichia coli O157:H7, this protein is Phospholipase A1 (pldA).